Consider the following 154-residue polypeptide: UPF0225 protein YPTB2098 (154 aa).

The protein belongs to the UPF0225 family.

The polypeptide is UPF0225 protein YPTB2098 (Yersinia pseudotuberculosis serotype I (strain IP32953)).